The primary structure comprises 360 residues: Histidinol-phosphate aminotransferase (360 aa).

Lys-211 carries the post-translational modification N6-(pyridoxal phosphate)lysine.

This sequence belongs to the class-II pyridoxal-phosphate-dependent aminotransferase family. Histidinol-phosphate aminotransferase subfamily. As to quaternary structure, homodimer. Pyridoxal 5'-phosphate is required as a cofactor.

It catalyses the reaction L-histidinol phosphate + 2-oxoglutarate = 3-(imidazol-4-yl)-2-oxopropyl phosphate + L-glutamate. It functions in the pathway amino-acid biosynthesis; L-histidine biosynthesis; L-histidine from 5-phospho-alpha-D-ribose 1-diphosphate: step 7/9. The sequence is that of Histidinol-phosphate aminotransferase from Sodalis glossinidius (strain morsitans).